Reading from the N-terminus, the 171-residue chain is CASP-like protein 5A2 (171 aa).

Topologically, residues 1 to 39 (MDGSAHLRDPPGPAVLRWRLEDMHIIPGTSGSLALRICQ) are cytoplasmic. Residues 40 to 60 (FSAAIVSFSVMISAANFSSVT) form a helical membrane-spanning segment. A topological domain (extracellular) is located at residue Ala61. The chain crosses the membrane as a helical span at residues 62 to 82 (FCFLVAAMVLQCMWSLSVATI). Over 83–106 (EGYAMLVGRSLRDSPLLSLFAVGD) the chain is Cytoplasmic. Residues 107-127 (WVTAVITFAGACASAGIAVLV) traverse the membrane as a helical segment. Residues 128 to 148 (GRDIHRGCDVNFCGRYAAAAG) are Extracellular-facing. A helical membrane pass occupies residues 149-169 (MAFLSWLLISTSFLFTFWLLA). The Cytoplasmic portion of the chain corresponds to 170-171 (TR).

Belongs to the Casparian strip membrane proteins (CASP) family. As to quaternary structure, homodimer and heterodimers.

The protein localises to the cell membrane. The sequence is that of CASP-like protein 5A2 from Pteridium aquilinum subsp. aquilinum (Bracken fern).